The following is an 86-amino-acid chain: Large ribosomal subunit protein bL31B (86 aa).

It belongs to the bacterial ribosomal protein bL31 family. Type B subfamily. Part of the 50S ribosomal subunit.

The sequence is that of Large ribosomal subunit protein bL31B from Burkholderia cenocepacia (strain ATCC BAA-245 / DSM 16553 / LMG 16656 / NCTC 13227 / J2315 / CF5610) (Burkholderia cepacia (strain J2315)).